A 317-amino-acid polypeptide reads, in one-letter code: Probable GTP 3',8-cyclase (317 aa).

A Radical SAM core domain is found at 4-223 (RYGRPLEDLR…KSEIREKHFR (220 aa)). Residue R13 coordinates GTP. [4Fe-4S] cluster is bound by residues C20, C24, and C27. K61 contributes to the GTP binding site. Residue G65 coordinates S-adenosyl-L-methionine. GTP is bound at residue T91. Position 115 (S115) interacts with S-adenosyl-L-methionine. K152 is a GTP binding site. C246 and C249 together coordinate [4Fe-4S] cluster. 251 to 253 (RVR) is a binding site for GTP. C263 is a binding site for [4Fe-4S] cluster.

It belongs to the radical SAM superfamily. MoaA family. [4Fe-4S] cluster is required as a cofactor.

The catalysed reaction is GTP + AH2 + S-adenosyl-L-methionine = (8S)-3',8-cyclo-7,8-dihydroguanosine 5'-triphosphate + 5'-deoxyadenosine + L-methionine + A + H(+). Its pathway is cofactor biosynthesis; molybdopterin biosynthesis. Its function is as follows. Catalyzes the cyclization of GTP to (8S)-3',8-cyclo-7,8-dihydroguanosine 5'-triphosphate. In Metallosphaera sedula (strain ATCC 51363 / DSM 5348 / JCM 9185 / NBRC 15509 / TH2), this protein is Probable GTP 3',8-cyclase.